The following is a 264-amino-acid chain: Anamorsin homolog 2 (264 aa).

Residues 1–142 (MAATAAALAV…KVSWSMGSSF (142 aa)) are N-terminal SAM-like domain. Positions 143–174 (PLKKATKGLPKIQIDDDSELIDEDSLLTEDDL) are linker. Positions 185, 194, 197, and 199 each coordinate [2Fe-2S] cluster. Residues 185 to 199 (CEVGATRKACKNCTC) are fe-S binding site A. Residues C225, C228, C236, and C239 each coordinate [4Fe-4S] cluster. Short sequence motifs (cx2C motif) lie at residues 225 to 228 (CGNC) and 236 to 239 (CGTC). A fe-S binding site B region spans residues 225–239 (CGNCGLGDAFRCGTC).

This sequence belongs to the anamorsin family. As to quaternary structure, monomer. [2Fe-2S] cluster serves as cofactor. It depends on [4Fe-4S] cluster as a cofactor.

It is found in the cytoplasm. The protein localises to the mitochondrion intermembrane space. Component of the cytosolic iron-sulfur (Fe-S) protein assembly (CIA) machinery. Required for the maturation of extramitochondrial Fe-S proteins. Part of an electron transfer chain functioning in an early step of cytosolic Fe-S biogenesis, facilitating the de novo assembly of a [4Fe-4S] cluster on the cytosolic Fe-S scaffold complex. Electrons are transferred from NADPH via a FAD- and FMN-containing diflavin oxidoreductase. Together with the diflavin oxidoreductase, also required for the assembly of the diferric tyrosyl radical cofactor of ribonucleotide reductase (RNR), probably by providing electrons for reduction during radical cofactor maturation in the catalytic small subunit. This Oryza sativa subsp. japonica (Rice) protein is Anamorsin homolog 2.